Here is a 371-residue protein sequence, read N- to C-terminus: Cytochrome b (371 aa).

Transmembrane regions (helical) follow at residues 25 to 45 (FGSM…FLAV), 69 to 90 (WMVQ…YIHI), 105 to 125 (WLSG…GYVL), and 170 to 190 (FFAL…LHVL). The heme b site is built by His75 and His89. His174 and His188 together coordinate heme b. His193 provides a ligand contact to a ubiquinone. 4 helical membrane passes run 218–238 (MKDL…ISFF), 280–300 (LGGA…PFIH), 312–332 (LMQL…WAAT), and 339–358 (FISI…ISNP).

This sequence belongs to the cytochrome b family. In terms of assembly, the cytochrome bc1 complex contains 3 respiratory subunits (MT-CYB, CYC1 and UQCRFS1), 2 core proteins (UQCRC1 and UQCRC2) and probably 6 low-molecular weight proteins. Heme b is required as a cofactor.

The protein localises to the mitochondrion inner membrane. Functionally, component of the ubiquinol-cytochrome c reductase complex (complex III or cytochrome b-c1 complex) that is part of the mitochondrial respiratory chain. The b-c1 complex mediates electron transfer from ubiquinol to cytochrome c. Contributes to the generation of a proton gradient across the mitochondrial membrane that is then used for ATP synthesis. The polypeptide is Cytochrome b (MT-CYB) (Boa constrictor (Boa)).